The sequence spans 364 residues: Aminomethyltransferase (364 aa).

Belongs to the GcvT family. As to quaternary structure, the glycine cleavage system is composed of four proteins: P, T, L and H.

It catalyses the reaction N(6)-[(R)-S(8)-aminomethyldihydrolipoyl]-L-lysyl-[protein] + (6S)-5,6,7,8-tetrahydrofolate = N(6)-[(R)-dihydrolipoyl]-L-lysyl-[protein] + (6R)-5,10-methylene-5,6,7,8-tetrahydrofolate + NH4(+). The glycine cleavage system catalyzes the degradation of glycine. In Salmonella paratyphi A (strain AKU_12601), this protein is Aminomethyltransferase.